Reading from the N-terminus, the 209-residue chain is Probable phosphatidylglycerophosphate synthase (209 aa).

The next 4 membrane-spanning stretches (helical) occupy residues 32 to 52 (ILTL…FYGG), 105 to 125 (ALIG…LILT), 147 to 167 (WGGK…VLPL), and 171 to 191 (LHVA…ITGV).

This sequence belongs to the CDP-alcohol phosphatidyltransferase class-I family.

It is found in the cell membrane. It catalyses the reaction a CDP-1,2-diacyl-sn-glycerol + sn-glycerol 3-phosphate = a 1,2-diacyl-sn-glycero-3-phospho-(1'-sn-glycero-3'-phosphate) + CMP + H(+). It participates in lipid metabolism; phospholipid metabolism. Its function is as follows. Probably catalyzes the synthesis of phosphatidylglycerophosphate by transferring a phosphatidyl group from CDP-diacylglycerol to glycerol 3-phosphate. This chain is Probable phosphatidylglycerophosphate synthase, found in Mycobacterium tuberculosis (strain CDC 1551 / Oshkosh).